Consider the following 251-residue polypeptide: CDP-diacylglycerol pyrophosphatase (251 aa).

The chain crosses the membrane as a helical span at residues 4–24 (AGLLFLVMIVIAVVAAGIGYW).

Belongs to the Cdh family.

The protein resides in the cell inner membrane. The enzyme catalyses a CDP-1,2-diacyl-sn-glycerol + H2O = a 1,2-diacyl-sn-glycero-3-phosphate + CMP + 2 H(+). Its pathway is phospholipid metabolism; CDP-diacylglycerol degradation; phosphatidate from CDP-diacylglycerol: step 1/1. This chain is CDP-diacylglycerol pyrophosphatase, found in Escherichia coli O7:K1 (strain IAI39 / ExPEC).